Reading from the N-terminus, the 191-residue chain is Small ribosomal subunit protein uS5 (191 aa).

The S5 DRBM domain occupies 20 to 83 (FADRLVAINR…EQAKRQMIRV (64 aa)). A disordered region spans residues 158-191 (TSPRMVAQRRGKKVSDILKKDGEPAEAAAEPAEA). Residues 170 to 180 (KVSDILKKDGE) are compositionally biased toward basic and acidic residues. Residues 182-191 (AEAAAEPAEA) show a composition bias toward low complexity.

It belongs to the universal ribosomal protein uS5 family. As to quaternary structure, part of the 30S ribosomal subunit. Contacts proteins S4 and S8.

With S4 and S12 plays an important role in translational accuracy. In terms of biological role, located at the back of the 30S subunit body where it stabilizes the conformation of the head with respect to the body. The sequence is that of Small ribosomal subunit protein uS5 from Dinoroseobacter shibae (strain DSM 16493 / NCIMB 14021 / DFL 12).